We begin with the raw amino-acid sequence, 263 residues long: Putative SNAP25 homologous protein SNAP30 (263 aa).

Disordered stretches follow at residues 1-61 (MFGF…LQSQ) and 132-209 (NLGG…DGLS). 2 stretches are compositionally biased toward polar residues: residues 8–34 (PGNN…TSSE) and 52–61 (FNDSGGLQSQ). Positions 158 to 173 (KPSKKSENHKEEREKL) are enriched in basic and acidic residues. Positions 180–194 (RSSSQPALDQPTNAL) are enriched in polar residues. A compositionally biased stretch (basic and acidic residues) spans 197-206 (VEQEKAKQDD). Residues 198–260 (EQEKAKQDDG…QGANQRARHL (63 aa)) form the t-SNARE coiled-coil homology domain.

The protein belongs to the SNAP-25 family.

The protein resides in the membrane. The protein localises to the cytoplasm. Functionally, vesicle trafficking protein that functions in the secretory pathway. The chain is Putative SNAP25 homologous protein SNAP30 (SNAP30) from Arabidopsis thaliana (Mouse-ear cress).